The following is a 501-amino-acid chain: Ribose import ATP-binding protein RbsA (501 aa).

ABC transporter domains follow at residues 5 to 241 and 252 to 495; these read LQLK…VGRK and APGE…VGKL. Residue 37–44 coordinates ATP; the sequence is GENGAGKS.

It belongs to the ABC transporter superfamily. Ribose importer (TC 3.A.1.2.1) family. The complex is composed of an ATP-binding protein (RbsA), two transmembrane proteins (RbsC) and a solute-binding protein (RbsB).

It is found in the cell inner membrane. It carries out the reaction D-ribose(out) + ATP + H2O = D-ribose(in) + ADP + phosphate + H(+). Part of the ABC transporter complex RbsABC involved in ribose import. Responsible for energy coupling to the transport system. This chain is Ribose import ATP-binding protein RbsA, found in Salmonella paratyphi A (strain ATCC 9150 / SARB42).